The following is a 521-amino-acid chain: GMC-type oxidoreductase acuG (521 aa).

FAD-binding positions include 14-15, 34-35, leucine 82, 90-93, alanine 492, and 503-504; these read TV, EA, NYGL, and YQ.

It belongs to the GMC oxidoreductase family. FAD serves as cofactor.

It functions in the pathway secondary metabolite biosynthesis. Functionally, GMC-type oxidoreductase; part of the gene cluster that mediates the biosynthesis of aculins. The pathway begins with the synthesis of 6-methylsalicylic acid by the polyketide synthase (PKS) acuA via condensation of acetate and malonate units. The 6-methylsalicylic acid decarboxylase acuB then catalyzes the decarboxylation of 6-methylsalicylic acid to yield m-cresol (also known as 3-methylphenol). These first reactions occur in the cytosol. The intermediate m-cresol is then transported into the endoplasmic reticulum where the cytochrome P450 monooxygenase acuC converts it to m-hydroxybenzyl alcohol, which is further converted to gentisyl alcohol by the cytochrome P450 monooxygenase acuD. Gentisyl alcohol is further oxidized by the oxidoreductase acuE that probably catalyzes hydroxylation of the aromatic ring. The aromatic system might then be opened by oxidation through a Baeyer-Villiger type of oxidation, which could be catalyzed by acuF, with the carboxylic acid at C-1 subsequently reduced to an aldehyde by acuG. Subsequently, a hemiacetal is formed, before the dehydrogenase acuH would reduce the double bond between C-4 and C-6. Finally, keto-enol tautomerism results in formation of aculinic acid, which exists as two diastereomers (both R/S configurations at C-1) by non-enzymatic hemiacetal formation. The carboxypeptidase acuI could be involved in the linking of aculinic acid to an aculene A moiety produced by the aculene biosynthesis cluster and which leads to the production of aculin A. AcuI may also be involved in the attachment of proline to aculinic acid to form epi-aculins A and B. This is GMC-type oxidoreductase acuG from Aspergillus aculeatus (strain ATCC 16872 / CBS 172.66 / WB 5094).